Reading from the N-terminus, the 355-residue chain is uncharacterized protein (355 aa).

Belongs to the ycf89 family.

The protein resides in the plastid. The protein localises to the chloroplast. This is an uncharacterized protein from Trieres chinensis (Marine centric diatom).